Here is a 584-residue protein sequence, read N- to C-terminus: Glutathione hydrolase proenzyme (584 aa).

Residues 1-25 (MAPAAMNLLCTVLYLLSSFAQVSDA) form the signal peptide. The N-linked (GlcNAc...) asparagine glycan is linked to N111. Residue R120 participates in L-glutamate binding. N-linked (GlcNAc...) asparagine glycans are attached at residues N135, N262, N272, N350, and N370. T395 (nucleophile) is an active-site residue. L-glutamate contacts are provided by residues T413, E434, and 465-466 (SS). Residue N547 is glycosylated (N-linked (GlcNAc...) asparagine).

This sequence belongs to the gamma-glutamyltransferase family. In terms of assembly, heterodimer composed of the light and heavy chains. The active site is located in the light chain. Cleaved by autocatalysis into a large and a small subunit and the autocatalytic cleavage is essential to the functional activation of the enzyme.

It is found in the secreted. It carries out the reaction an N-terminal (5-L-glutamyl)-[peptide] + an alpha-amino acid = 5-L-glutamyl amino acid + an N-terminal L-alpha-aminoacyl-[peptide]. The catalysed reaction is glutathione + H2O = L-cysteinylglycine + L-glutamate. The enzyme catalyses an S-substituted glutathione + H2O = an S-substituted L-cysteinylglycine + L-glutamate. It catalyses the reaction leukotriene C4 + H2O = leukotriene D4 + L-glutamate. It functions in the pathway sulfur metabolism; glutathione metabolism. Its function is as follows. Cleaves the gamma-glutamyl bond of extracellular glutathione (gamma-Glu-Cys-Gly), glutathione conjugates, and other gamma-glutamyl compounds. The metabolism of glutathione releases free glutamate and the dipeptide cysteinyl-glycine, which is hydrolyzed to cysteine and glycine by dipeptidases. In the presence of high concentrations of dipeptides and some amino acids, can also catalyze a transpeptidation reaction, transferring the gamma-glutamyl moiety to an acceptor amino acid to form a new gamma-glutamyl compound. Initiates extracellular glutathione (GSH) breakdown, provides cells with a local cysteine supply and contributes to maintain intracellular GSH level. It is part of the cell antioxidant defense mechanism. This is Glutathione hydrolase proenzyme from Arthroderma benhamiae (strain ATCC MYA-4681 / CBS 112371) (Trichophyton mentagrophytes).